The primary structure comprises 140 residues: MEVILKFGILGFGAIFGYLFGEVDLLVKVLVCFIVADYISGLLASGYLGELSSKMGFKGIAKKIAILILVAIAHQIDLILGTHNTTRDAVIFFYLANELISILENFVRMGMKVPEVLKNLILIFDAKSGEDEEKHDKDMD.

Transmembrane regions (helical) follow at residues 4–21 (ILKF…YLFG) and 26–48 (LVKV…SGYL).

This sequence belongs to the bacteriophage holin family. Cp-1 holin subfamily.

The protein localises to the cell membrane. This is an uncharacterized protein from Listeria monocytogenes serovar 1/2a (strain ATCC BAA-679 / EGD-e).